Reading from the N-terminus, the 336-residue chain is MQKMRTLGEFIVEKQHDFPHASGELSSLLASIRLAAKIVNREINKAGLADIIGASGNDNIQGEEQQKLDLYANEKFKAALEARDQVCGVASEEEDEAVAFNKELNKNAKYVVLMDPLDGSSNIDVNVSVGTIFSIYRRVSPVGTPPTQEDFLQPGNKQVAAGYVIYGSSTMLVYTTGNGVNGFTYDPSLGTFYLSHENMRIPENGKIYSINEGNYIRFPTGVKKYIKFCQENVPEDGRPYTSRYIGSLVADFHRNLLKGGIYLYPSTQSHPNGKLRLLYECNPMAFLIEQAGGLASDGVHRIMDIKPTELHQRVPFFVGSKNMVHKVEEFLETYPD.

Positions 92, 115, 117, and 118 each coordinate Mg(2+). Residues 118–121 (DGSS), Asn211, Tyr244, 262–264 (YLY), and Lys274 contribute to the substrate site. Mg(2+) is bound at residue Glu280.

The protein belongs to the FBPase class 1 family. As to quaternary structure, homotetramer. It depends on Mg(2+) as a cofactor.

The protein resides in the cytoplasm. The catalysed reaction is beta-D-fructose 1,6-bisphosphate + H2O = beta-D-fructose 6-phosphate + phosphate. Its pathway is carbohydrate biosynthesis; gluconeogenesis. This chain is Fructose-1,6-bisphosphatase class 1, found in Vibrio cholerae serotype O1 (strain ATCC 39541 / Classical Ogawa 395 / O395).